Consider the following 457-residue polypeptide: Siroheme synthase 2 (457 aa).

The segment at 1 to 204 (MDHLPIFCQL…DDRQAVADTT (204 aa)) is precorrin-2 dehydrogenase /sirohydrochlorin ferrochelatase. NAD(+) contacts are provided by residues 22–23 (DV) and 43–44 (LD). Serine 128 carries the phosphoserine modification. The uroporphyrinogen-III C-methyltransferase stretch occupies residues 216–457 (GEVVLVGAGP…RDKLNWFSNH (242 aa)). Proline 225 contributes to the S-adenosyl-L-methionine binding site. Aspartate 248 serves as the catalytic Proton acceptor. The Proton donor role is filled by lysine 270. S-adenosyl-L-methionine is bound by residues 301-303 (GGD), isoleucine 306, 331-332 (TA), methionine 382, and glycine 411.

It in the N-terminal section; belongs to the precorrin-2 dehydrogenase / sirohydrochlorin ferrochelatase family. The protein in the C-terminal section; belongs to the precorrin methyltransferase family.

It carries out the reaction uroporphyrinogen III + 2 S-adenosyl-L-methionine = precorrin-2 + 2 S-adenosyl-L-homocysteine + H(+). The catalysed reaction is precorrin-2 + NAD(+) = sirohydrochlorin + NADH + 2 H(+). The enzyme catalyses siroheme + 2 H(+) = sirohydrochlorin + Fe(2+). Its pathway is cofactor biosynthesis; adenosylcobalamin biosynthesis; precorrin-2 from uroporphyrinogen III: step 1/1. It functions in the pathway cofactor biosynthesis; adenosylcobalamin biosynthesis; sirohydrochlorin from precorrin-2: step 1/1. It participates in porphyrin-containing compound metabolism; siroheme biosynthesis; precorrin-2 from uroporphyrinogen III: step 1/1. The protein operates within porphyrin-containing compound metabolism; siroheme biosynthesis; siroheme from sirohydrochlorin: step 1/1. Its pathway is porphyrin-containing compound metabolism; siroheme biosynthesis; sirohydrochlorin from precorrin-2: step 1/1. Multifunctional enzyme that catalyzes the SAM-dependent methylations of uroporphyrinogen III at position C-2 and C-7 to form precorrin-2 via precorrin-1. Then it catalyzes the NAD-dependent ring dehydrogenation of precorrin-2 to yield sirohydrochlorin. Finally, it catalyzes the ferrochelation of sirohydrochlorin to yield siroheme. In Klebsiella pneumoniae subsp. pneumoniae (strain ATCC 700721 / MGH 78578), this protein is Siroheme synthase 2.